Consider the following 357-residue polypeptide: Sulfate/thiosulfate import ATP-binding protein CysA (357 aa).

Positions 3–237 (ITIQNLNKHF…PENAFVTEFL (235 aa)) constitute an ABC transporter domain. 35–42 (GPSGCGKT) is an ATP binding site.

It belongs to the ABC transporter superfamily. Sulfate/tungstate importer (TC 3.A.1.6) family. The complex is composed of two ATP-binding proteins (CysA), two transmembrane proteins (CysT and CysW) and a solute-binding protein (CysP).

The protein localises to the cell inner membrane. The enzyme catalyses sulfate(out) + ATP + H2O = sulfate(in) + ADP + phosphate + H(+). The catalysed reaction is thiosulfate(out) + ATP + H2O = thiosulfate(in) + ADP + phosphate + H(+). Part of the ABC transporter complex CysAWTP involved in sulfate/thiosulfate import. Responsible for energy coupling to the transport system. The sequence is that of Sulfate/thiosulfate import ATP-binding protein CysA from Neisseria meningitidis serogroup B (strain ATCC BAA-335 / MC58).